Here is a 106-residue protein sequence, read N- to C-terminus: MERRVWFLSRSARSLAAMFSCTYSRATHRHSGKTVVRSSGTRCTRQPRLCRVTRSTLVATSPRRRSLVQQRRPPLREQNGGSGSSCVSSGGSASTVKTPGSRRASK.

The disordered stretch occupies residues 54-106 (RSTLVATSPRRRSLVQQRRPPLREQNGGSGSSCVSSGGSASTVKTPGSRRASK). Residues 84–94 (SSCVSSGGSAS) show a composition bias toward low complexity.

This is an uncharacterized protein from Human adenovirus C serotype 2 (HAdV-2).